A 95-amino-acid polypeptide reads, in one-letter code: uncharacterized protein (95 aa).

Residues 1–73 (MAHFKDDLQT…AQQPSMRTEL (73 aa)) form a disordered region. 2 stretches are compositionally biased toward polar residues: residues 42–52 (SNHSPSVQESP) and 62–73 (GSAQQPSMRTEL).

This is an uncharacterized protein from Homo sapiens (Human).